We begin with the raw amino-acid sequence, 233 residues long: Biosynthetic peptidoglycan transglycosylase (233 aa).

The chain crosses the membrane as a helical span at residues 17–37 (IVLAVLALVILPYALIFFYVL).

It belongs to the glycosyltransferase 51 family.

The protein localises to the cell inner membrane. The enzyme catalyses [GlcNAc-(1-&gt;4)-Mur2Ac(oyl-L-Ala-gamma-D-Glu-L-Lys-D-Ala-D-Ala)](n)-di-trans,octa-cis-undecaprenyl diphosphate + beta-D-GlcNAc-(1-&gt;4)-Mur2Ac(oyl-L-Ala-gamma-D-Glu-L-Lys-D-Ala-D-Ala)-di-trans,octa-cis-undecaprenyl diphosphate = [GlcNAc-(1-&gt;4)-Mur2Ac(oyl-L-Ala-gamma-D-Glu-L-Lys-D-Ala-D-Ala)](n+1)-di-trans,octa-cis-undecaprenyl diphosphate + di-trans,octa-cis-undecaprenyl diphosphate + H(+). It functions in the pathway cell wall biogenesis; peptidoglycan biosynthesis. Its function is as follows. Peptidoglycan polymerase that catalyzes glycan chain elongation from lipid-linked precursors. In Rhizobium leguminosarum bv. trifolii (strain WSM2304), this protein is Biosynthetic peptidoglycan transglycosylase.